A 603-amino-acid chain; its full sequence is uncharacterized protein (603 aa).

Residues 257–281 (AGEAASSDHDQKISRVTRKRPREPK) are disordered.

This is an uncharacterized protein from Saccharomyces cerevisiae (strain ATCC 204508 / S288c) (Baker's yeast).